A 214-amino-acid polypeptide reads, in one-letter code: Large ribosomal subunit protein uL4c (214 aa).

Residues 42–81 form a disordered region; that stretch reads VKQSNEKRQGSANTKTRSEVRGGGRKPWRQKGTGRARAGS. Over residues 64-75 the composition is skewed to basic residues; it reads GGRKPWRQKGTG.

Belongs to the universal ribosomal protein uL4 family. As to quaternary structure, part of the 50S ribosomal subunit.

It localises to the plastid. It is found in the chloroplast. Its function is as follows. Probably binds the 23S rRNA. The polypeptide is Large ribosomal subunit protein uL4c (rpl4) (Pyropia yezoensis (Susabi-nori)).